We begin with the raw amino-acid sequence, 507 residues long: ATP synthase subunit alpha (507 aa).

169–176 (GDRQTGKT) contacts ATP.

Belongs to the ATPase alpha/beta chains family. F-type ATPases have 2 components, CF(1) - the catalytic core - and CF(0) - the membrane proton channel. CF(1) has five subunits: alpha(3), beta(3), gamma(1), delta(1), epsilon(1). CF(0) has three main subunits: a(1), b(2) and c(9-12). The alpha and beta chains form an alternating ring which encloses part of the gamma chain. CF(1) is attached to CF(0) by a central stalk formed by the gamma and epsilon chains, while a peripheral stalk is formed by the delta and b chains.

The protein resides in the cell inner membrane. It catalyses the reaction ATP + H2O + 4 H(+)(in) = ADP + phosphate + 5 H(+)(out). In terms of biological role, produces ATP from ADP in the presence of a proton gradient across the membrane. The alpha chain is a regulatory subunit. This Magnetococcus marinus (strain ATCC BAA-1437 / JCM 17883 / MC-1) protein is ATP synthase subunit alpha.